We begin with the raw amino-acid sequence, 194 residues long: MDVNNVELIISAVRPEQYPETDLPEYALAGRSNVGKSSFINTMIRRKSMARISQKPGKTQTLNFYKIEEALFFVDVPGYGFAKVSKTEREKWGVMIETYITSREQLRGVIQIVDLRHKPTEDDRMMYEFLKYYDIPVIVVATKADKIPRSKWQKNAKIVRETLDFDPDDKFVLFSSETKMGKDEAWQFIKEGME.

Positions 22-194 (DLPEYALAGR…AWQFIKEGME (173 aa)) constitute an EngB-type G domain. GTP is bound by residues 30–37 (GRSNVGKS), 57–61 (GKTQT), 75–78 (DVPG), 142–145 (TKAD), and 174–176 (FSS). Mg(2+)-binding residues include Ser37 and Thr59.

Belongs to the TRAFAC class TrmE-Era-EngA-EngB-Septin-like GTPase superfamily. EngB GTPase family. Requires Mg(2+) as cofactor.

Necessary for normal cell division and for the maintenance of normal septation. This is Probable GTP-binding protein EngB from Listeria monocytogenes serotype 4b (strain CLIP80459).